Here is an 89-residue protein sequence, read N- to C-terminus: MSENMNIKSKIITQFGVNSKDSGKSEVQIALLTNRINYLQNHFSLHKKDHCSRRGLLNMVSKRRKLLNYLKDENISRYINIINQLKLRR.

It belongs to the universal ribosomal protein uS15 family. As to quaternary structure, part of the 30S ribosomal subunit. Forms a bridge to the 50S subunit in the 70S ribosome, contacting the 23S rRNA.

Functionally, one of the primary rRNA binding proteins, it binds directly to 16S rRNA where it helps nucleate assembly of the platform of the 30S subunit by binding and bridging several RNA helices of the 16S rRNA. Forms an intersubunit bridge (bridge B4) with the 23S rRNA of the 50S subunit in the ribosome. The polypeptide is Small ribosomal subunit protein uS15 (Buchnera aphidicola subsp. Baizongia pistaciae (strain Bp)).